Consider the following 412-residue polypeptide: Argininosuccinate synthase (412 aa).

Residues 15–23 (AYSGGLDTS) and A42 each bind ATP. Y93 and S98 together coordinate L-citrulline. G123 is an ATP binding site. L-aspartate is bound by residues T125, N129, and D130. An L-citrulline-binding site is contributed by N129. Residues R133, S185, S194, E270, and Y282 each coordinate L-citrulline.

It belongs to the argininosuccinate synthase family. Type 1 subfamily. Homotetramer.

It is found in the cytoplasm. It catalyses the reaction L-citrulline + L-aspartate + ATP = 2-(N(omega)-L-arginino)succinate + AMP + diphosphate + H(+). It participates in amino-acid biosynthesis; L-arginine biosynthesis; L-arginine from L-ornithine and carbamoyl phosphate: step 2/3. This is Argininosuccinate synthase from Psychrobacter arcticus (strain DSM 17307 / VKM B-2377 / 273-4).